We begin with the raw amino-acid sequence, 110 residues long: Small ubiquitin-related modifier 3 (110 aa).

Residues K5 and K7 each participate in a glycyl lysine isopeptide (Lys-Gly) (interchain with G-Cter in SUMO2) cross-link. A Glycyl lysine isopeptide (Lys-Gly) (interchain with G-Cter in SUMO); alternate cross-link involves residue K11. A Glycyl lysine isopeptide (Lys-Gly) (interchain with G-Cter in SUMO2); alternate cross-link involves residue K11. The Ubiquitin-like domain occupies 15–92 (DHINLKVAGQ…IDVFQQQTGG (78 aa)). Residues 88-101 (QQTGGSASRGSVPT) are compositionally biased toward polar residues. The tract at residues 88-110 (QQTGGSASRGSVPTPNRCPDLCY) is disordered. A Glycyl lysine isopeptide (Gly-Lys) (interchain with K-? in acceptor proteins) cross-link involves residue G92. Residues 93-110 (SASRGSVPTPNRCPDLCY) constitute a propeptide that is removed on maturation.

The protein belongs to the ubiquitin family. SUMO subfamily. In terms of assembly, interacts with SAE2 and UBE2I. Covalently attached to a number of proteins. Interacts with USP25 (via ts SIM domain); the interaction sumoylates USP25 and inhibits its ubiquitin hydrolyzing activity. Interacts with BMAL1. Post-translationally, polymeric chains can be formed through Lys-11 cross-linking. In terms of processing, cleavage of precursor form by SENP1, SENP2 or SENP5 is necessary for function.

The protein localises to the cytoplasm. The protein resides in the nucleus. It is found in the PML body. Ubiquitin-like protein which can be covalently attached to target lysines either as a monomer or as a lysine-linked polymer. Does not seem to be involved in protein degradation and may function as an antagonist of ubiquitin in the degradation process. Plays a role in a number of cellular processes such as nuclear transport, DNA replication and repair, mitosis and signal transduction. Covalent attachment to its substrates requires prior activation by the E1 complex SAE1-SAE2 and linkage to the E2 enzyme UBE2I, and can be promoted by an E3 ligase such as PIAS1-4, RANBP2 or CBX4. Plays a role in the regulation of sumoylation status of SETX. The polypeptide is Small ubiquitin-related modifier 3 (Mus musculus (Mouse)).